Here is an 89-residue protein sequence, read N- to C-terminus: Small ribosomal subunit protein uS15 (89 aa).

Basic and acidic residues predominate over residues 1-21 (MALTTEEKKQVLSEYGLHETD). The tract at residues 1 to 24 (MALTTEEKKQVLSEYGLHETDTGS) is disordered.

It belongs to the universal ribosomal protein uS15 family. In terms of assembly, part of the 30S ribosomal subunit. Forms a bridge to the 50S subunit in the 70S ribosome, contacting the 23S rRNA.

Functionally, one of the primary rRNA binding proteins, it binds directly to 16S rRNA where it helps nucleate assembly of the platform of the 30S subunit by binding and bridging several RNA helices of the 16S rRNA. In terms of biological role, forms an intersubunit bridge (bridge B4) with the 23S rRNA of the 50S subunit in the ribosome. In Rhodococcus opacus (strain B4), this protein is Small ribosomal subunit protein uS15.